We begin with the raw amino-acid sequence, 418 residues long: Serine hydroxymethyltransferase (418 aa).

(6S)-5,6,7,8-tetrahydrofolate contacts are provided by residues Leu-121 and 125–127 (GHL). An N6-(pyridoxal phosphate)lysine modification is found at Lys-230. (6S)-5,6,7,8-tetrahydrofolate contacts are provided by residues Glu-246 and 355 to 357 (SPF).

It belongs to the SHMT family. As to quaternary structure, homodimer. Requires pyridoxal 5'-phosphate as cofactor.

The protein resides in the cytoplasm. It carries out the reaction (6R)-5,10-methylene-5,6,7,8-tetrahydrofolate + glycine + H2O = (6S)-5,6,7,8-tetrahydrofolate + L-serine. It participates in one-carbon metabolism; tetrahydrofolate interconversion. The protein operates within amino-acid biosynthesis; glycine biosynthesis; glycine from L-serine: step 1/1. In terms of biological role, catalyzes the reversible interconversion of serine and glycine with tetrahydrofolate (THF) serving as the one-carbon carrier. This reaction serves as the major source of one-carbon groups required for the biosynthesis of purines, thymidylate, methionine, and other important biomolecules. Also exhibits THF-independent aldolase activity toward beta-hydroxyamino acids, producing glycine and aldehydes, via a retro-aldol mechanism. The chain is Serine hydroxymethyltransferase from Streptococcus pneumoniae (strain Hungary19A-6).